The chain runs to 386 residues: S-adenosylmethionine synthase (386 aa).

H16 is an ATP binding site. D18 lines the Mg(2+) pocket. A K(+)-binding site is contributed by E44. Residues E57 and Q100 each coordinate L-methionine. The tract at residues 100–110 is flexible loop; that stretch reads QSPDINQGVDR. ATP contacts are provided by residues 164 to 166, 230 to 231, D239, 245 to 246, A262, and K266; these read DGK, KF, and RK. Residue D239 participates in L-methionine binding. K270 provides a ligand contact to L-methionine.

The protein belongs to the AdoMet synthase family. As to quaternary structure, homotetramer; dimer of dimers. Mg(2+) is required as a cofactor. It depends on K(+) as a cofactor.

The protein localises to the cytoplasm. It carries out the reaction L-methionine + ATP + H2O = S-adenosyl-L-methionine + phosphate + diphosphate. Its pathway is amino-acid biosynthesis; S-adenosyl-L-methionine biosynthesis; S-adenosyl-L-methionine from L-methionine: step 1/1. In terms of biological role, catalyzes the formation of S-adenosylmethionine (AdoMet) from methionine and ATP. The overall synthetic reaction is composed of two sequential steps, AdoMet formation and the subsequent tripolyphosphate hydrolysis which occurs prior to release of AdoMet from the enzyme. The polypeptide is S-adenosylmethionine synthase (Helicobacter hepaticus (strain ATCC 51449 / 3B1)).